The sequence spans 556 residues: Formate--tetrahydrofolate ligase (556 aa).

Thr-65–Thr-72 serves as a coordination point for ATP.

This sequence belongs to the formate--tetrahydrofolate ligase family.

The catalysed reaction is (6S)-5,6,7,8-tetrahydrofolate + formate + ATP = (6R)-10-formyltetrahydrofolate + ADP + phosphate. Its pathway is one-carbon metabolism; tetrahydrofolate interconversion. This is Formate--tetrahydrofolate ligase from Clostridium acidurici (Gottschalkia acidurici).